The chain runs to 206 residues: Small ribosomal subunit protein eS1 (206 aa).

It belongs to the eukaryotic ribosomal protein eS1 family.

This Halobacterium salinarum (strain ATCC 29341 / DSM 671 / R1) protein is Small ribosomal subunit protein eS1.